The sequence spans 148 residues: Protein NrdI (148 aa).

Belongs to the NrdI family.

Functionally, probably involved in ribonucleotide reductase function. This is Protein NrdI from Corynebacterium glutamicum (strain R).